The sequence spans 275 residues: AA9 family lytic polysaccharide monooxygenase D (275 aa).

A signal peptide spans 1–17 (MKLSLLAIAAIAPFVSA). Positions 18 and 101 each coordinate Cu(2+). Residues C67 and C189 are joined by a disulfide bond. H176 provides a ligand contact to O2. Cu(2+) is bound at residue Y186. Residue N220 is glycosylated (N-linked (GlcNAc...) asparagine).

This sequence belongs to the polysaccharide monooxygenase AA9 family. The cofactor is Cu(2+).

The protein resides in the secreted. It carries out the reaction [(1-&gt;4)-beta-D-glucosyl]n+m + reduced acceptor + O2 = 4-dehydro-beta-D-glucosyl-[(1-&gt;4)-beta-D-glucosyl]n-1 + [(1-&gt;4)-beta-D-glucosyl]m + acceptor + H2O.. In terms of biological role, lytic polysaccharide monooxygenase (LPMO) that depolymerizes crystalline and amorphous polysaccharides via the oxidation of scissile alpha- or beta-(1-4)-glycosidic bonds, yielding C1 or C4 oxidation products. Catalysis by LPMOs requires the reduction of the active-site copper from Cu(II) to Cu(I) by a reducing agent and H(2)O(2) or O(2) as a cosubstrate. This Aspergillus tamarii protein is AA9 family lytic polysaccharide monooxygenase D.